Here is a 176-residue protein sequence, read N- to C-terminus: MSKVKKNDEILSEVLVDVNRVTKVVKGGRSFAFSAYVVVGDKAGRVGAGHGKAKEVNEARGKAKQAAKKRMMKVPLYQNRTIHHDVVGKSGAAKVILRRAKAGTGVIAGGSMRAIFDSLGVHDIVAKSIGSTNVYAMISATFDALNKLASPKSIAMRRDKKVNEISVKSADIQVNE.

In terms of domain architecture, S5 DRBM spans Leu-11–Val-74.

The protein belongs to the universal ribosomal protein uS5 family. As to quaternary structure, part of the 30S ribosomal subunit. Contacts proteins S4 and S8.

Its function is as follows. With S4 and S12 plays an important role in translational accuracy. Functionally, located at the back of the 30S subunit body where it stabilizes the conformation of the head with respect to the body. The protein is Small ribosomal subunit protein uS5 of Rickettsia peacockii (strain Rustic).